Consider the following 1551-residue polypeptide: Transient receptor potential cation channel subfamily M member-like 2 (1551 aa).

The Cytoplasmic segment spans residues Met1 to Arg714. An intramembrane segment occupies Trp715–Pro730. Topologically, residues Ile731–Pro837 are cytoplasmic. The disordered stretch occupies residues Ala744–Asn767. Residues Phe838–Val858 form a helical membrane-spanning segment. At Val859–Pro877 the chain is on the extracellular side. Residues Thr878–Ala898 traverse the membrane as a helical segment. Glu893 and Gln896 together coordinate Ca(2+). At Ala899 to Thr916 the chain is on the cytoplasmic side. The chain crosses the membrane as a helical span at residues Trp917–Phe937. Ca(2+) is bound by residues Asn918 and Asp921. Residues Thr938–Arg947 are Extracellular-facing. A helical membrane pass occupies residues Ile948–Asn968. Over Arg969–Lys980 the chain is Cytoplasmic. Residues Met981–Ile1001 form a helical membrane-spanning segment. Residues Ala1002–Asn1018 lie on the Extracellular side of the membrane. The N-linked (GlcNAc...) asparagine glycan is linked to Asn1017. Residues Thr1019–Met1034 constitute an intramembrane region (pore-forming). Positions Tyr1035–Glu1037 match the Selectivity filter motif. At Tyr1035–Arg1059 the chain is on the extracellular side. Residues Leu1040–Glu1042 carry the Prevents fast channel inactivation motif. The helical transmembrane segment at Trp1060–Leu1080 threads the bilayer. Topologically, residues Leu1081–Val1116 are cytoplasmic. Residues Phe1117–Trp1135 lie within the membrane without spanning it. Topologically, residues Arg1136–Phe1551 are cytoplasmic. Positions Leu1184 to Met1209 form a coiled coil. A Nudix hydrolase domain is found at Trp1394–Met1546. The Nudix box signature appears at Gly1428 to Met1449.

This sequence belongs to the transient receptor (TC 1.A.4) family. LTrpC subfamily. TRPM2 sub-subfamily. As to quaternary structure, homotetramer.

It localises to the cell membrane. Its activity is regulated as follows. Activated by phosphatidylinositol 4,5-bisphosphate (PIP2). Although PIP2 is essential for the channel activation, its contribution to the level of channel activity is minimal. Also activated by diphosphate ribose-2'-phosphate. Upon binding to ADPR, channel activation requires only a short initial cytosolic Ca(2+) increase, then the activation is sustained by the uptake of extracellular Ca(2+). Activated by 2-aminoethyl diphenylborinate (2-APB) in a Ca(2+)-dependent manner. 2-APB prevents the inactivation of the channel. Its function is as follows. Nonselective, voltage-independent cation channel that mediates Ca(2+) and to a lesser extent Na(+) influx, leading to increased cytoplasmic Ca(2+) levels. Functions as a ligand-gated ion channel. Binding of ADP-ribose causes a conformation change; the channel is primed but still requires Ca(2+) binding to trigger channel opening. May have ADP-ribose pyrophosphatase activity which reduces ADP-ribose levels induced by oxidative stress, thus preventing the channel activation by reactive oxygen species. This is Transient receptor potential cation channel subfamily M member-like 2 from Nematostella vectensis (Starlet sea anemone).